Consider the following 359-residue polypeptide: 4-hydroxy-3-methylbut-2-en-1-yl diphosphate synthase (flavodoxin) (359 aa).

[4Fe-4S] cluster is bound by residues C264, C267, C299, and E306.

The protein belongs to the IspG family. Requires [4Fe-4S] cluster as cofactor.

It catalyses the reaction (2E)-4-hydroxy-3-methylbut-2-enyl diphosphate + oxidized [flavodoxin] + H2O + 2 H(+) = 2-C-methyl-D-erythritol 2,4-cyclic diphosphate + reduced [flavodoxin]. It participates in isoprenoid biosynthesis; isopentenyl diphosphate biosynthesis via DXP pathway; isopentenyl diphosphate from 1-deoxy-D-xylulose 5-phosphate: step 5/6. Its function is as follows. Converts 2C-methyl-D-erythritol 2,4-cyclodiphosphate (ME-2,4cPP) into 1-hydroxy-2-methyl-2-(E)-butenyl 4-diphosphate. The chain is 4-hydroxy-3-methylbut-2-en-1-yl diphosphate synthase (flavodoxin) from Helicobacter pylori (strain Shi470).